Here is a 218-residue protein sequence, read N- to C-terminus: MKLNFKGFFKAAGLFPLALMLSGCISYALVSHTAKGSSGKYQSQSDTITGLSQAKDSNGTKGYVFVGESLDYLITDGADDIVKMLNDPALNRHNIQVADDARFVLNAGKKKFTGTISLYYYWNNEEEKALATHYGFACGVQHCTRSLENLKGTIHEKNKNMDYSKVMAFYHPFKVRFYEYYSPRGIPDGVSAALLPVTVTLDIITAPLQFLVVYAVNQ.

A helical transmembrane segment spans residues 11 to 31; that stretch reads AAGLFPLALMLSGCISYALVS.

The protein localises to the membrane. This is an uncharacterized protein from Escherichia coli (strain K12).